A 129-amino-acid polypeptide reads, in one-letter code: Histone H2A.J (129 aa).

Residues 1 to 22 (MSGRGKQGGKVRAKAKSRSSRA) form a disordered region. 2 positions are modified to N6-acetyllysine: Lys6 and Lys10. Residues 7–19 (QGGKVRAKAKSRS) are compositionally biased toward basic residues. Residue Lys10 is modified to N6-lactoyllysine; alternate. Gln105 is modified (N5-methylglutamine). Thr121 bears the Phosphothreonine; by DCAF1 mark.

Belongs to the histone H2A family. The nucleosome is a histone octamer containing two molecules each of H2A, H2B, H3 and H4 assembled in one H3-H4 heterotetramer and two H2A-H2B heterodimers. The octamer wraps approximately 147 bp of DNA. Monoubiquitination of Lys-120 (H2AXK119ub) gives a specific tag for epigenetic transcriptional repression. Following DNA double-strand breaks (DSBs), it is ubiquitinated through 'Lys-63' linkage of ubiquitin moieties. In terms of processing, glutamine methylation at Gln-105 (H2AQ104me) by FBL is specifically dedicated to polymerase I. It is present at 35S ribosomal DNA locus and impairs binding of the FACT complex. Post-translationally, phosphorylation on Ser-2 (H2AS1ph) is enhanced during mitosis. Phosphorylation on Ser-2 by RPS6KA5/MSK1 directly represses transcription. Acetylation of H3 inhibits Ser-2 phosphorylation by RPS6KA5/MSK1. Phosphorylation at Thr-121 (H2AT120ph) by DCAF1 is present in the regulatory region of many tumor suppresor genes and down-regulates their transcription.

It is found in the nucleus. The protein resides in the chromosome. Functionally, core component of nucleosome. Nucleosomes wrap and compact DNA into chromatin, limiting DNA accessibility to the cellular machineries which require DNA as a template. Histones thereby play a central role in transcription regulation, DNA repair, DNA replication and chromosomal stability. DNA accessibility is regulated via a complex set of post-translational modifications of histones, also called histone code, and nucleosome remodeling. The polypeptide is Histone H2A.J (Mus musculus (Mouse)).